The primary structure comprises 207 residues: Small ribosomal subunit protein uS4 (207 aa).

Residues 22-54 (KSARRSISDKSKFESKPGQHGRTSGSRTSDFGL) form a disordered region. The span at 27–38 (SISDKSKFESKP) shows a compositional bias: basic and acidic residues. Polar residues predominate over residues 42–52 (GRTSGSRTSDF). In terms of domain architecture, S4 RNA-binding spans 97–157 (SRLDNVVYRM…EKSKKQLRII (61 aa)).

Belongs to the universal ribosomal protein uS4 family. As to quaternary structure, part of the 30S ribosomal subunit. Contacts protein S5. The interaction surface between S4 and S5 is involved in control of translational fidelity.

One of the primary rRNA binding proteins, it binds directly to 16S rRNA where it nucleates assembly of the body of the 30S subunit. In terms of biological role, with S5 and S12 plays an important role in translational accuracy. The chain is Small ribosomal subunit protein uS4 from Leptothrix cholodnii (strain ATCC 51168 / LMG 8142 / SP-6) (Leptothrix discophora (strain SP-6)).